We begin with the raw amino-acid sequence, 649 residues long: V-type ATP synthase subunit I (649 aa).

The next 7 helical transmembrane spans lie at 312–332, 360–380, 455–475, 485–505, 520–540, 556–576, and 593–613; these read FLSF…GLIF, FMIL…FFGV, DNIL…LGML, IGWV…LQAV, GQVG…GGII, VFSD…GAMV, and VLII…GGVI.

Belongs to the V-ATPase 116 kDa subunit family.

Its subcellular location is the cell membrane. Produces ATP from ADP in the presence of a proton gradient across the membrane. This is V-type ATP synthase subunit I (atpI) from Chlamydia muridarum (strain MoPn / Nigg).